Consider the following 840-residue polypeptide: Urease (840 aa).

The region spanning 402–840 (GAIDCHVHYI…VPLSRNYFLF (439 aa)) is the Urease domain. Ni(2+)-binding residues include His407, His409, and Lys490. The residue at position 490 (Lys490) is an N6-carboxylysine. Residue His492 coordinates substrate. 2 residues coordinate Ni(2+): His519 and His545. The Proton donor role is filled by His593. Asp633 provides a ligand contact to Ni(2+).

In the C-terminal section; belongs to the metallo-dependent hydrolases superfamily. Urease alpha subunit family. Homohexamer. Other oligomeric forms may exist depending on pH and presence of salts. The cofactor is Ni cation. Post-translationally, carboxylation allows a single lysine to coordinate two nickel ions.

It catalyses the reaction urea + 2 H2O + H(+) = hydrogencarbonate + 2 NH4(+). Its pathway is nitrogen metabolism; urea degradation; CO(2) and NH(3) from urea (urease route): step 1/1. Its activity is regulated as follows. P-hydroxymercuribenzoate irreversibly abolishes ureolytic activity, but does not inhibit the ability to activate platelets. Also inhibited by acetohydroxamic acid (AHA), a chelator of Ni2+ and Zn2+ ions. Urea hydrolase involved in nitrogen recycling from ureide, purine, and arginine catabolism. Is known to be highly toxic and lethal when given by intravenous route, producing convulsions and other signs of central nervous system intoxication associated with the high levels of ammonia formed in the blood of mice and rabbits. Is neurotoxic in mammals, when directly injected into hippocampus. It may induce seizures by acting at a neuronal network level, thereby disturbing electroencephalographic rhythms and causing metabolic alterations in key areas related to epileptogenesis and to neurogenic pulmonary edema. It increases calcium influx and neuronal firing rate in the hippocampus. Is able to insert itself into lipid bilayers, altering physicochemical properties of artificial membranes, and forming cation-selective ion channels. In vitro, has the ability to induce platelet aggregation, platelet granules secretion and release of ATP. In contrast to canatoxin, another urease from C.ensiformis, is not lethal to mice when intraperitoneally injected. The sequence is that of Urease from Canavalia ensiformis (Jack bean).